The sequence spans 322 residues: Acetyl-coenzyme A carboxylase carboxyl transferase subunit alpha (322 aa).

Residues 30 to 293 form the CoA carboxyltransferase C-terminal domain; it reads ALDISAEIAR…KQTLQESLRK (264 aa).

This sequence belongs to the AccA family. Acetyl-CoA carboxylase is a heterohexamer composed of biotin carboxyl carrier protein (AccB), biotin carboxylase (AccC) and two subunits each of ACCase subunit alpha (AccA) and ACCase subunit beta (AccD).

It localises to the cytoplasm. It carries out the reaction N(6)-carboxybiotinyl-L-lysyl-[protein] + acetyl-CoA = N(6)-biotinyl-L-lysyl-[protein] + malonyl-CoA. It participates in lipid metabolism; malonyl-CoA biosynthesis; malonyl-CoA from acetyl-CoA: step 1/1. Its function is as follows. Component of the acetyl coenzyme A carboxylase (ACC) complex. First, biotin carboxylase catalyzes the carboxylation of biotin on its carrier protein (BCCP) and then the CO(2) group is transferred by the carboxyltransferase to acetyl-CoA to form malonyl-CoA. In Nitrosomonas europaea (strain ATCC 19718 / CIP 103999 / KCTC 2705 / NBRC 14298), this protein is Acetyl-coenzyme A carboxylase carboxyl transferase subunit alpha.